The primary structure comprises 517 residues: Keratin-associated protein 16-1 (517 aa).

Tandem repeats lie at residues 73–77 (CCDPV), 93–97 (CCEAT), 128–132 (CCQPV), 153–157 (CCEPA), 168–172 (CCQPV), 198–202 (CCQPV), 208–212 (CCSAV), 228–232 (CCQPV), 248–252 (CCDPS), 283–287 (CCVQS), and 303–307 (CCVSS). The interval 73-307 (CCDPVICEPS…CQEPSCCVSS (235 aa)) is 11 X 5 AA repeats of C-C-X(3). The disordered stretch occupies residues 483 to 517 (VSEEAPCQPTEAKPISPTTREAAAAQPAASKPANC). Residues 504–517 (AAAAQPAASKPANC) are compositionally biased toward low complexity.

It belongs to the KRTAP type 16 family.

The protein is Keratin-associated protein 16-1 (KRTAP16-1) of Homo sapiens (Human).